The following is a 638-amino-acid chain: ATP-dependent zinc metalloprotease FtsH (638 aa).

The Cytoplasmic segment spans residues 1 to 11 (MSQKGKNKKWR). The helical transmembrane segment at 12-32 (SAGLYALLAIVLISLATTFLG) threads the bilayer. Residues 33–114 (NRPPERLEIS…LAVRPVQEEG (82 aa)) are Lumenal-facing. The helical transmembrane segment at 115–135 (LLGRILSTFFLPVLLLLGLFF) threads the bilayer. Residues 136-638 (LLRRAQNGPG…TLPMAVNAGA (503 aa)) lie on the Cytoplasmic side of the membrane. 209–216 (GPPGTGKT) serves as a coordination point for ATP. His431 is a binding site for Zn(2+). The active site involves Glu432. Zn(2+) is bound by residues His435 and Asp510.

In the central section; belongs to the AAA ATPase family. This sequence in the C-terminal section; belongs to the peptidase M41 family. As to quaternary structure, homohexamer. Zn(2+) serves as cofactor.

The protein resides in the cellular thylakoid membrane. Its function is as follows. Acts as a processive, ATP-dependent zinc metallopeptidase for both cytoplasmic and membrane proteins. Plays a role in the quality control of integral membrane proteins. This chain is ATP-dependent zinc metalloprotease FtsH, found in Synechococcus sp. (strain JA-2-3B'a(2-13)) (Cyanobacteria bacterium Yellowstone B-Prime).